A 382-amino-acid chain; its full sequence is Mannitol-1-phosphate 5-dehydrogenase (382 aa).

Alanine 4 to glycine 15 provides a ligand contact to NAD(+).

This sequence belongs to the mannitol dehydrogenase family.

The enzyme catalyses D-mannitol 1-phosphate + NAD(+) = beta-D-fructose 6-phosphate + NADH + H(+). The polypeptide is Mannitol-1-phosphate 5-dehydrogenase (Vibrio campbellii (strain ATCC BAA-1116)).